The primary structure comprises 672 residues: MSSGGNSSNVNRNSGSSNVITLNDSDEETEDSNLGSSSSTNLCKVCGAEKAALHYGALSCVGCKGFFRRALLKADQLECAANGECTVSVLQKTQCRSCRFNKCLREGMNPAYVRPNRDAPPKPRKPTTTVATCDQTDRGRTTKSREEWMKKMTVEMRTILMTLLNIETKVMKGDTQQEASKLYPLKGIDKLSDIIETPIQLKGKRTEMRYEAYRMAGNDELCAIAYRRLIAAIDWVESLSPLLGHLTPQDKIALVKSSFAPLMVFNFCARTAEACQDENVLCLCNFAYVPRNISKMYEDTYHLGNGLVERALNELVAVYREYGMREEEIVCVNAMICLNPLAKDVSDSLFEKIVELRNRIADCLFSIVKEVRLSPTPNVCYGHILLSLATVTELANAMSENLQFAQTFSNQGEIPLLTDLFGCFTVEPFFKEVDELAAMSLEKAKAEKKKEMSTQTDRLPPPRALLKRQATIDEDSEEPARQNFRLLQPPNNFYITEMLDDLRNNHAENHLISLNFDASNVSNAIASRPSFEDLGTVPSGSTVTRRIGSNIQGPSHLPQCGSTVTQRPTVPSSTTSSTFYNFPPPPGYPPLNAGYTPNVNYPNLYQQPQYFQNFQQNNYPSQVMEQQNYGNVESTSYPFPRNDGFVYNHPNIPYSHHNNSLQQNNFHNQYAN.

Residues 1–19 are compositionally biased toward low complexity; the sequence is MSSGGNSSNVNRNSGSSNV. The segment at 1-38 is disordered; it reads MSSGGNSSNVNRNSGSSNVITLNDSDEETEDSNLGSSS. The nuclear receptor DNA-binding region spans 40-115; that stretch reads TNLCKVCGAE…EGMNPAYVRP (76 aa). NR C4-type zinc fingers lie at residues 43 to 63 and 79 to 98; these read CKVCGAEKAALHYGALSCVGC and CAANGECTVSVLQKTQCRSC. In terms of domain architecture, NR LBD spans 155–424; it reads EMRTILMTLL…PLLTDLFGCF (270 aa). Residues 550–577 form a disordered region; it reads NIQGPSHLPQCGSTVTQRPTVPSSTTSS. Residues 562-577 are compositionally biased toward low complexity; that stretch reads STVTQRPTVPSSTTSS.

Belongs to the nuclear hormone receptor family.

It localises to the nucleus. Orphan nuclear receptor. In Caenorhabditis elegans, this protein is Nuclear hormone receptor family member nhr-5 (nhr-5).